Here is a 724-residue protein sequence, read N- to C-terminus: Palmitoyltransferase AKR1 (724 aa).

The Cytoplasmic portion of the chain corresponds to 1–308; the sequence is MSGQLNVAED…HAKMVTFFTP (308 aa). ANK repeat units follow at residues 54–84, 90–119, 124–153, 157–187, 191–220, and 224–253; these read PTLVKYHAACQRGDLKTVKDMIEAGVIDVKA, EQVSGLHWASANNRLNLVRYLIAQGADVNI, LEATPLHWASKSGYVYIVHCLLEHGADPLI, QGYNLLHTSTFSSEVMLITYVLFTGQIPVDS, TGKTALHWAAYQGDPNTVEALLKFDADVRV, and GGFTPLHWATVKGHPHVLKALIEHGSDVFL. The helical transmembrane segment at 309–329 threads the bilayer; the sequence is WLILGLILSFFAYFSILLAIL. Over 330 to 331 the chain is Lumenal; sequence GC. The helical transmembrane segment at 332-352 threads the bilayer; sequence LLTVLAAGYGLYNFVFPSFIL. Over 353–360 the chain is Cytoplasmic; that stretch reads MKRIVIFK. Residues 361–381 traverse the membrane as a helical segment; it reads TPLLAGILSGTIFWLLYVWLF. At 382 to 392 the chain is on the lumenal side; that stretch reads KMLPATFDDEP. The helical transmembrane segment at 393 to 413 threads the bilayer; it reads ILNLTVFALFAGVVFLLTKLL. Topologically, residues 414-489 are cytoplasmic; that stretch reads QSDPGYIVPA…YNYIGFRNHK (76 aa). In terms of domain architecture, DHHC spans 446–496; it reads HFCIHSWIRLPLRAKYKRFVHSVILRYDHYCPWIYNYIGFRNHKIFIYFIL. The active-site S-palmitoyl cysteine intermediate is the cysteine 476. A helical transmembrane segment spans residues 490–510; sequence IFIYFILLLDLGILALAKLCL. Residues 511 to 543 lie on the Lumenal side of the membrane; the sequence is EYFDELKDHAKNKDALKCSILSKDLCAGFTYDP. Residues 544–564 form a helical membrane-spanning segment; sequence FTLFLLEWVCVQGMWILALSF. At 565–724 the chain is on the cytoplasmic side; that stretch reads VQFFECLKGV…ERVISIEEIV (160 aa).

This sequence belongs to the DHHC palmitoyltransferase family. AKR/ZDHHC17 subfamily.

It is found in the early endosome membrane. The protein resides in the golgi apparatus membrane. The catalysed reaction is L-cysteinyl-[protein] + hexadecanoyl-CoA = S-hexadecanoyl-L-cysteinyl-[protein] + CoA. In terms of biological role, palmitoyltransferase specific for casein kinase 1. This is Palmitoyltransferase AKR1 (AKR1) from Eremothecium gossypii (strain ATCC 10895 / CBS 109.51 / FGSC 9923 / NRRL Y-1056) (Yeast).